The chain runs to 88 residues: Large ribosomal subunit protein bL27 (88 aa).

Residues 1–23 form a disordered region; it reads MAHKKAGGSSRNGRDSAGRRLGV.

The protein belongs to the bacterial ribosomal protein bL27 family.

This Methylorubrum extorquens (strain CM4 / NCIMB 13688) (Methylobacterium extorquens) protein is Large ribosomal subunit protein bL27.